The chain runs to 79 residues: Small ribosomal subunit protein uS17 (79 aa).

This sequence belongs to the universal ribosomal protein uS17 family. As to quaternary structure, part of the 30S ribosomal subunit.

Functionally, one of the primary rRNA binding proteins, it binds specifically to the 5'-end of 16S ribosomal RNA. This Paramagnetospirillum magneticum (strain ATCC 700264 / AMB-1) (Magnetospirillum magneticum) protein is Small ribosomal subunit protein uS17.